The primary structure comprises 199 residues: Pyridoxine/pyridoxamine 5'-phosphate oxidase (199 aa).

Residues 44-49 (RTVLLK), 59-60 (YT), lysine 66, and glutamine 91 each bind FMN. Lysine 49 is a binding site for substrate. Substrate-binding residues include tyrosine 109, arginine 113, and serine 117. Residues 126-127 (QS) and tryptophan 171 each bind FMN. Position 177–179 (177–179 (RLH)) interacts with substrate. Position 181 (arginine 181) interacts with FMN.

Belongs to the pyridoxamine 5'-phosphate oxidase family. Homodimer. FMN is required as a cofactor.

The enzyme catalyses pyridoxamine 5'-phosphate + O2 + H2O = pyridoxal 5'-phosphate + H2O2 + NH4(+). It catalyses the reaction pyridoxine 5'-phosphate + O2 = pyridoxal 5'-phosphate + H2O2. It functions in the pathway cofactor metabolism; pyridoxal 5'-phosphate salvage; pyridoxal 5'-phosphate from pyridoxamine 5'-phosphate: step 1/1. Its pathway is cofactor metabolism; pyridoxal 5'-phosphate salvage; pyridoxal 5'-phosphate from pyridoxine 5'-phosphate: step 1/1. In terms of biological role, catalyzes the oxidation of either pyridoxine 5'-phosphate (PNP) or pyridoxamine 5'-phosphate (PMP) into pyridoxal 5'-phosphate (PLP). The chain is Pyridoxine/pyridoxamine 5'-phosphate oxidase from Xanthomonas euvesicatoria pv. vesicatoria (strain 85-10) (Xanthomonas campestris pv. vesicatoria).